Reading from the N-terminus, the 152-residue chain is Large ribosomal subunit protein uL15 (152 aa).

The segment at 1–54 is disordered; that stretch reads MGLKLNELSPGVGAKKTAHRKGRGIGSGLGKTGGRGVKGQKSRSGSGVRRGFEG. Over residues 24-37 the composition is skewed to gly residues; it reads GIGSGLGKTGGRGV.

Belongs to the universal ribosomal protein uL15 family. Part of the 50S ribosomal subunit.

Functionally, binds to the 23S rRNA. The sequence is that of Large ribosomal subunit protein uL15 from Psychrobacter sp. (strain PRwf-1).